The sequence spans 451 residues: Probable tyrosyl-DNA phosphodiesterase (451 aa).

The disordered stretch occupies residues 1–34; it reads MKRTIQETPGPSSTTVPPPKKLNSQRNGSNLEPG. A compositionally biased stretch (polar residues) spans 22-32; that stretch reads LNSQRNGSNLE. His-131 functions as the Nucleophile in the catalytic mechanism. Lys-133 lines the substrate pocket. Residues 266–269 form an interaction with DNA region; the sequence is SIGS. The active-site Proton donor/acceptor is the His-356. Substrate is bound at residue Lys-358.

It belongs to the tyrosyl-DNA phosphodiesterase family.

Its subcellular location is the nucleus. DNA repair enzyme that can remove a variety of covalent adducts from DNA through hydrolysis of a 3'-phosphodiester bond, giving rise to DNA with a free 3' phosphate. Catalyzes the hydrolysis of dead-end complexes between DNA and the topoisomerase I active site tyrosine residue. Hydrolyzes 3'-phosphoglycolates on protruding 3' ends on DNA double-strand breaks due to DNA damage by radiation and free radicals. Acts on blunt-ended double-strand DNA breaks and on single-stranded DNA. May have low 3'exonuclease activity and may be able to remove a single nucleoside from the 3'end of DNA and RNA molecules with 3'hydroxyl groups. Has no exonuclease activity towards DNA or RNA with a 3'phosphate. This is Probable tyrosyl-DNA phosphodiesterase from Caenorhabditis elegans.